A 230-amino-acid polypeptide reads, in one-letter code: Uracil-DNA glycosylase (230 aa).

The active-site Proton acceptor is the aspartate 70.

It belongs to the uracil-DNA glycosylase (UDG) superfamily. UNG family.

The protein localises to the cytoplasm. It catalyses the reaction Hydrolyzes single-stranded DNA or mismatched double-stranded DNA and polynucleotides, releasing free uracil.. Its function is as follows. Excises uracil residues from the DNA which can arise as a result of misincorporation of dUMP residues by DNA polymerase or due to deamination of cytosine. In Pseudomonas savastanoi pv. phaseolicola (strain 1448A / Race 6) (Pseudomonas syringae pv. phaseolicola (strain 1448A / Race 6)), this protein is Uracil-DNA glycosylase.